The sequence spans 367 residues: YVSLSPDSVFNIITDDISHQILSRSNCERSKRPKRVFSIYWNVPTFMCHQYGMNFDEVTDFNIKHNSKDNFRGETISIYYDPGKFPALMPLKNGNYEERNGGVPQRGNITIHLQQFNEDLDKMTPDKNFGGIGVIDFERWKPIFRQNWGNTEIHKKYSIELVRKEHPKWSESMIEAEATKKFEKYARYFMEETLKLAKKTRKRAKWGYYGFPYCYNVTPNNPGPDCDAKATIENDRLSWMYNNQEILFPSVYVRHEQKPEERVYLVQGRIKEAVRISNNLEHSPSVLAYWWYVYQDKMDIYLSETDVEKTFQEIVTNGGDGIIIWGSSSDVNSLSKCKRLREYLLNTLGPFAVNVTETVNGRSSLNF.

Cystine bridges form between Cys48–Cys337 and Cys214–Cys226. N-linked (GlcNAc...) asparagine glycosylation occurs at Asn108. The active-site Proton donor is Glu138. An N-linked (GlcNAc...) asparagine glycan is attached at Asn354.

Belongs to the glycosyl hydrolase 56 family.

It carries out the reaction Random hydrolysis of (1-&gt;4)-linkages between N-acetyl-beta-D-glucosamine and D-glucuronate residues in hyaluronate.. Functionally, may play a role in reproduction. This is Hyaluronidase from Polistes annularis (Paper wasp).